A 255-amino-acid chain; its full sequence is Triosephosphate isomerase (255 aa).

9–11 (NWK) contributes to the substrate binding site. His95 serves as the catalytic Electrophile. Glu167 acts as the Proton acceptor in catalysis. Substrate contacts are provided by residues Gly173, Ser212, and 233–234 (GG).

This sequence belongs to the triosephosphate isomerase family. Homodimer.

It localises to the cytoplasm. It carries out the reaction D-glyceraldehyde 3-phosphate = dihydroxyacetone phosphate. Its pathway is carbohydrate biosynthesis; gluconeogenesis. It functions in the pathway carbohydrate degradation; glycolysis; D-glyceraldehyde 3-phosphate from glycerone phosphate: step 1/1. Functionally, involved in the gluconeogenesis. Catalyzes stereospecifically the conversion of dihydroxyacetone phosphate (DHAP) to D-glyceraldehyde-3-phosphate (G3P). The polypeptide is Triosephosphate isomerase (Yersinia pseudotuberculosis serotype O:1b (strain IP 31758)).